Reading from the N-terminus, the 556-residue chain is Formate--tetrahydrofolate ligase (556 aa).

65–72 contacts ATP; the sequence is TPAGEGKS.

This sequence belongs to the formate--tetrahydrofolate ligase family.

It catalyses the reaction (6S)-5,6,7,8-tetrahydrofolate + formate + ATP = (6R)-10-formyltetrahydrofolate + ADP + phosphate. Its pathway is one-carbon metabolism; tetrahydrofolate interconversion. This is Formate--tetrahydrofolate ligase from Streptococcus equi subsp. zooepidemicus (strain MGCS10565).